The chain runs to 1104 residues: Lon protease homolog, mitochondrial (1104 aa).

Residues 1–58 (MLPLRAFARLAQRPRLSRPTQLARSSLPRPSPSRPAAHYLALAPAPSTRFLHSSPPVL) constitute a mitochondrion transit peptide. Residues 8–144 (ARLAQRPRLS…PGAGGPKEVA (137 aa)) are disordered. Residues 22–46 (LARSSLPRPSPSRPAAHYLALAPAP) show a composition bias toward low complexity. Basic and acidic residues predominate over residues 80 to 103 (KQDDQVEKPLPDAESSKSAEERAK). A compositionally biased stretch (low complexity) spans 104–128 (SQSSKPDIKASSSDSVSSSAPAPGS). The span at 129-139 (ADGGSPPGAGG) shows a compositional bias: gly residues. A Lon N-terminal domain is found at 155–444 (VLAIPITHRP…RALVLLKKEL (290 aa)). 597–604 (GPPGVGKT) serves as a coordination point for ATP. The Lon proteolytic domain maps to 895 to 1082 (SPPAGVSTGL…RQVLHEAFRG (188 aa)). Active-site residues include serine 987 and lysine 1030.

Belongs to the peptidase S16 family. As to quaternary structure, homohexamer or homoheptamer. Organized in a ring with a central cavity.

It localises to the mitochondrion matrix. It catalyses the reaction Hydrolysis of proteins in presence of ATP.. ATP-dependent serine protease that mediates the selective degradation of misfolded, unassembled or oxidatively damaged polypeptides as well as certain short-lived regulatory proteins in the mitochondrial matrix. May also have a chaperone function in the assembly of inner membrane protein complexes. Participates in the regulation of mitochondrial gene expression and in the maintenance of the integrity of the mitochondrial genome. Binds to mitochondrial DNA in a site-specific manner. The sequence is that of Lon protease homolog, mitochondrial from Cryptococcus neoformans var. neoformans serotype D (strain B-3501A) (Filobasidiella neoformans).